The chain runs to 288 residues: Homoserine kinase (288 aa).

79-89 provides a ligand contact to ATP; sequence PLARGLGSSSS.

Belongs to the GHMP kinase family. Homoserine kinase subfamily.

It is found in the cytoplasm. The enzyme catalyses L-homoserine + ATP = O-phospho-L-homoserine + ADP + H(+). It functions in the pathway amino-acid biosynthesis; L-threonine biosynthesis; L-threonine from L-aspartate: step 4/5. Its function is as follows. Catalyzes the ATP-dependent phosphorylation of L-homoserine to L-homoserine phosphate. This is Homoserine kinase from Streptococcus gordonii (strain Challis / ATCC 35105 / BCRC 15272 / CH1 / DL1 / V288).